The primary structure comprises 344 residues: S-adenosylmethionine:tRNA ribosyltransferase-isomerase (344 aa).

It belongs to the QueA family. Monomer.

It localises to the cytoplasm. It carries out the reaction 7-aminomethyl-7-carbaguanosine(34) in tRNA + S-adenosyl-L-methionine = epoxyqueuosine(34) in tRNA + adenine + L-methionine + 2 H(+). It participates in tRNA modification; tRNA-queuosine biosynthesis. Its function is as follows. Transfers and isomerizes the ribose moiety from AdoMet to the 7-aminomethyl group of 7-deazaguanine (preQ1-tRNA) to give epoxyqueuosine (oQ-tRNA). The polypeptide is S-adenosylmethionine:tRNA ribosyltransferase-isomerase (Pediococcus pentosaceus (strain ATCC 25745 / CCUG 21536 / LMG 10740 / 183-1w)).